A 249-amino-acid polypeptide reads, in one-letter code: Solute carrier family 25 member 35 (249 aa).

2 Solcar repeats span residues 1-90 (MDFL…AEAG) and 152-243 (QSWK…LRMV). 4 consecutive transmembrane segments (helical) span residues 38–58 (TYQR…KVDG), 59–79 (LAAL…MNGI), 154–174 (WKVA…AMTP), and 226–249 (LGPH…TYTK).

It belongs to the mitochondrial carrier (TC 2.A.29) family.

The protein localises to the mitochondrion inner membrane. The enzyme catalyses a dicarboxylate(in) + sulfate(out) = a dicarboxylate(out) + sulfate(in). Functionally, putative antiporter that exchanges dicarboxylates and sulfur oxoanions across the inner membrane of mitochondria. In Bos taurus (Bovine), this protein is Solute carrier family 25 member 35 (SLC25A35).